Reading from the N-terminus, the 257-residue chain is 3-deoxy-manno-octulosonate cytidylyltransferase (257 aa).

The protein belongs to the KdsB family.

It localises to the cytoplasm. The catalysed reaction is 3-deoxy-alpha-D-manno-oct-2-ulosonate + CTP = CMP-3-deoxy-beta-D-manno-octulosonate + diphosphate. It participates in nucleotide-sugar biosynthesis; CMP-3-deoxy-D-manno-octulosonate biosynthesis; CMP-3-deoxy-D-manno-octulosonate from 3-deoxy-D-manno-octulosonate and CTP: step 1/1. Its pathway is bacterial outer membrane biogenesis; lipopolysaccharide biosynthesis. Its function is as follows. Activates KDO (a required 8-carbon sugar) for incorporation into bacterial lipopolysaccharide in Gram-negative bacteria. This is 3-deoxy-manno-octulosonate cytidylyltransferase from Xylella fastidiosa (strain 9a5c).